The primary structure comprises 227 residues: Rho-related GTP-binding protein RhoN (227 aa).

14–21 contributes to the GTP binding site; it reads GDAECGKT. The Effector region motif lies at 36–44; the sequence is YVPTVFENY. Residues 61–65 and 119–122 each bind GTP; these read DTSGS and CKLD. A disordered region spans residues 186–227; that stretch reads HRQLRRTDSRRGLQRSTQLSGRPDRGNEGEMHKDRAKSCNLM. Basic and acidic residues predominate over residues 207-227; sequence RPDRGNEGEMHKDRAKSCNLM. Position 224 is a cysteine methyl ester (Cys-224). Cys-224 carries the S-geranylgeranyl cysteine lipid modification. Residues 225-227 constitute a propeptide, removed in mature form; the sequence is NLM.

This sequence belongs to the small GTPase superfamily. Rho family. As to quaternary structure, interacts with the Rho-GAP domain of RACGAP1. Interacts with UBXD5. Interacts with PRAG1. Expressed specifically in neurons in the brain and spinal cord and also in hepatic stellate cells.

It localises to the cytoplasmic vesicle. It is found in the secretory vesicle. The protein localises to the acrosome membrane. Functionally, may be specifically involved in neuronal and hepatic functions. Is a C3 toxin-insensitive member of the Rho subfamily. The chain is Rho-related GTP-binding protein RhoN (Rnd2) from Mus musculus (Mouse).